The primary structure comprises 461 residues: MFYCSKCNAPLQIDHSLQDANTGQLNLLTQNKQSVSAAAPKLNSVDFIPKERLELLEEVEKNGHNEPIHFLDTIEEHGTDSSPDHDSSPDASLVVNGGEIEEPVPVSAPSPESSEADGPNPISGRIHTLEKIFDILSNKGEVNHPMCDECAELLIENYKLKFDQNQREKDSYMTFLKKLKLKDDSDIKESDLDTKLRDSIQECRDLAASEQEKLQELRSLEQNREELSKELQDVKMELALQQSTELSNALRLKNELHWTLQRKADQLAQEKARYRVVLNRLDHLRNLNMYTKFFDIAADDQFGKINGFRLGYKVPWSEVNCALGQVVLLAVFLCKRLDVRLQSYKLVPMGSRSQIVKLSSDHDKSKTVLNLYSSNELSLGKLFNFNKLDVSMIALLDVLSQIEATVLALDSEIELPYTISPKKDVIGGKSIRVTSNSDWTFSCKFLLVNFKWILTYASSRH.

The segment covering 75–88 (EEHGTDSSPDHDSS) has biased composition (basic and acidic residues). Disordered regions lie at residues 75-94 (EEHGTDSSPDHDSSPDASLV) and 101-124 (EEPVPVSAPSPESSEADGPNPISG). Low complexity predominate over residues 103–113 (PVPVSAPSPES). A coiled-coil region spans residues 194-286 (TKLRDSIQEC…VLNRLDHLRN (93 aa)).

This sequence belongs to the beclin family.

Functionally, required for cytoplasm to vacuole transport (Cvt) and autophagy. Also involved in endosome-to-Golgi retrograde transport. The sequence is that of Autophagy-related protein 6 (ATG6) from Meyerozyma guilliermondii (strain ATCC 6260 / CBS 566 / DSM 6381 / JCM 1539 / NBRC 10279 / NRRL Y-324) (Yeast).